Consider the following 220-residue polypeptide: Vesicle-associated membrane protein 7 (220 aa).

At Ala2 the chain carries N-acetylalanine. Residues 2–188 (AILFAVVARG…ARAMCVKNVK (187 aa)) lie on the Cytoplasmic side of the membrane. The region spanning 7 to 110 (VVARGTTILA…AMNSEFSSVL (104 aa)) is the Longin domain. The v-SNARE coiled-coil homology domain occupies 125–185 (RVTETQAQVD…RNLARAMCVK (61 aa)). Ser167 and Ser168 each carry phosphoserine. The helical; Anchor for type IV membrane protein transmembrane segment at 189–209 (LTAIIVVVSIVFIYIIVSPLC) threads the bilayer. The Vesicular portion of the chain corresponds to 210-220 (GGFTWPSCVKK).

It belongs to the synaptobrevin family. In terms of assembly, may interact with STX17. Component of the SNARE complex composed of STX4, SNAP23 and VAMP7 that binds SYT7 during lysosomal exocytosis. Component of the SNARE complex composed of STX7, STX8, VAMP7 and VTI1B that is required for heterotypic fusion of late endosomes with lysosomes. Interacts with PICALM. Interacts with RAB21. Expressed in brain, kidney, liver, lung, spleen and thymus. Not expressed in heart and skeletal muscle.

The protein resides in the cytoplasmic vesicle. The protein localises to the secretory vesicle membrane. Its subcellular location is the golgi apparatus. It is found in the trans-Golgi network membrane. It localises to the late endosome membrane. The protein resides in the lysosome membrane. The protein localises to the endoplasmic reticulum membrane. Its subcellular location is the phagosome membrane. It is found in the synapse. It localises to the synaptosome. In terms of biological role, involved in the targeting and/or fusion of transport vesicles to their target membrane during transport of proteins from the early endosome to the lysosome. Required for heterotypic fusion of late endosomes with lysosomes and homotypic lysosomal fusion. Required for calcium regulated lysosomal exocytosis. Involved in the export of chylomicrons from the endoplasmic reticulum to the cis Golgi. Required for exocytosis of mediators during eosinophil and neutrophil degranulation, and target cell killing by natural killer cells. Required for focal exocytosis of late endocytic vesicles during phagosome formation. The chain is Vesicle-associated membrane protein 7 (Vamp7) from Rattus norvegicus (Rat).